Consider the following 184-residue polypeptide: Holliday junction branch migration complex subunit RuvA (184 aa).

Positions 1–64 are domain I; the sequence is MIRAIEGIIT…EDANLLYGFL (64 aa). The segment at 65 to 144 is domain II; it reads DTNEQKMFEM…SDESVPGYQN (80 aa). A region of interest (flexible linker) is located at residue asparagine 144. The segment at 144–184 is domain III; it reads NEALLALEALGFKREKIVKILPDLKSTSTSELVKEALKKLA.

This sequence belongs to the RuvA family. In terms of assembly, homotetramer. Forms an RuvA(8)-RuvB(12)-Holliday junction (HJ) complex. HJ DNA is sandwiched between 2 RuvA tetramers; dsDNA enters through RuvA and exits via RuvB. An RuvB hexamer assembles on each DNA strand where it exits the tetramer. Each RuvB hexamer is contacted by two RuvA subunits (via domain III) on 2 adjacent RuvB subunits; this complex drives branch migration. In the full resolvosome a probable DNA-RuvA(4)-RuvB(12)-RuvC(2) complex forms which resolves the HJ.

Its subcellular location is the cytoplasm. Functionally, the RuvA-RuvB-RuvC complex processes Holliday junction (HJ) DNA during genetic recombination and DNA repair, while the RuvA-RuvB complex plays an important role in the rescue of blocked DNA replication forks via replication fork reversal (RFR). RuvA specifically binds to HJ cruciform DNA, conferring on it an open structure. The RuvB hexamer acts as an ATP-dependent pump, pulling dsDNA into and through the RuvAB complex. HJ branch migration allows RuvC to scan DNA until it finds its consensus sequence, where it cleaves and resolves the cruciform DNA. The chain is Holliday junction branch migration complex subunit RuvA from Campylobacter curvus (strain 525.92).